A 120-amino-acid polypeptide reads, in one-letter code: Late histone H2A.2.2 (120 aa).

Residues methionine 1–serine 18 are compositionally biased toward basic residues. Residues methionine 1 to glycine 22 form a disordered region. Residue serine 2 is modified to N-acetylserine. Residue serine 2 is modified to Phosphoserine. Glutamine 104 carries the post-translational modification N5-methylglutamine. Lysine 119 participates in a covalent cross-link: Glycyl lysine isopeptide (Lys-Gly) (interchain with G-Cter in ubiquitin).

It belongs to the histone H2A family. In terms of assembly, the nucleosome is a histone octamer containing two molecules each of H2A, H2B, H3 and H4 assembled in one H3-H4 heterotetramer and two H2A-H2B heterodimers. The octamer wraps approximately 147 bp of DNA. In terms of processing, monoubiquitination of Lys-119 gives a specific tag for epigenetic transcriptional repression. Phosphorylation of Ser-2 directly represses transcription.

It localises to the nucleus. It is found in the chromosome. Functionally, core component of nucleosome. Nucleosomes wrap and compact DNA into chromatin, limiting DNA accessibility to the cellular machineries which require DNA as a template. Histones thereby play a central role in transcription regulation, DNA repair, DNA replication and chromosomal stability. DNA accessibility is regulated via a complex set of post-translational modifications of histones, also called histone code, and nucleosome remodeling. This Psammechinus miliaris (Green sea urchin) protein is Late histone H2A.2.2.